The chain runs to 173 residues: Glycine cleavage system H protein, mitochondrial (173 aa).

A mitochondrion-targeting transit peptide spans 1–48 (MALRAVRSVRAAVGGLRAISAPSAPCLPRPWGLRAGAVRELRTGPALL). In terms of domain architecture, Lipoyl-binding spans 66–148 (VGTVGISNFA…YEDGWLIKMT (83 aa)). Lys-107 bears the N6-lipoyllysine mark.

This sequence belongs to the GcvH family. As to quaternary structure, interacts with GLDC. The glycine cleavage system is composed of four proteins: P (GLDC), T (GCST), L (DLD) and H (GCSH). It depends on (R)-lipoate as a cofactor.

Its subcellular location is the mitochondrion. The glycine cleavage system catalyzes the degradation of glycine. The H protein (GCSH) shuttles the methylamine group of glycine from the P protein (GLDC) to the T protein (GCST). Has a pivotal role in the lipoylation of enzymes involved in cellular energetics such as the mitochondrial dihydrolipoyllysine-residue acetyltransferase component of pyruvate dehydrogenase complex (DLAT), and the mitochondrial dihydrolipoyllysine-residue succinyltransferase component of 2-oxoglutarate dehydrogenase complex (DLST). The chain is Glycine cleavage system H protein, mitochondrial from Bos taurus (Bovine).